Here is a 112-residue protein sequence, read N- to C-terminus: Peptidyl-tRNA hydrolase (112 aa).

It belongs to the PTH2 family.

It is found in the cytoplasm. The catalysed reaction is an N-acyl-L-alpha-aminoacyl-tRNA + H2O = an N-acyl-L-amino acid + a tRNA + H(+). Its function is as follows. The natural substrate for this enzyme may be peptidyl-tRNAs which drop off the ribosome during protein synthesis. In Haloquadratum walsbyi (strain DSM 16790 / HBSQ001), this protein is Peptidyl-tRNA hydrolase.